Consider the following 274-residue polypeptide: Proto-oncogene FRAT1 (274 aa).

Disordered stretches follow at residues 1–24 (MPCR…DDSF), 55–107 (AHDR…PGAV), 132–194 (GASA…DDPH), and 232–274 (GPLS…VPGS). The span at 7-23 (EEEEAGDEAEGEEDDDS) shows a compositional bias: acidic residues. Residues 191–214 (DDPHRLLQQLVLSGNLIKEAVRRL) form an involved in GSK-3 binding region. Ser243 and Ser246 each carry phosphoserine.

The protein belongs to the GSK-3-binding protein family. In terms of assembly, binds DVL1. Binds GSK-3 and prevent GSK-3-dependent phosphorylation. Post-translationally, phosphorylated. Highly expressed in testis. Lower level of expression in spleen, thymus and brain.

Its subcellular location is the cytoplasm. In terms of biological role, positively regulates the Wnt signaling pathway by stabilizing beta-catenin through the association with GSK-3. May play a role in tumor progression and collaborate with PIM1 and MYC in lymphomagenesis. In Mus musculus (Mouse), this protein is Proto-oncogene FRAT1 (Frat1).